Reading from the N-terminus, the 196-residue chain is Endoribonuclease YbeY (196 aa).

Histidine 120, histidine 124, and histidine 130 together coordinate Zn(2+).

It belongs to the endoribonuclease YbeY family. The cofactor is Zn(2+).

Its subcellular location is the cytoplasm. Functionally, single strand-specific metallo-endoribonuclease involved in late-stage 70S ribosome quality control and in maturation of the 3' terminus of the 16S rRNA. The chain is Endoribonuclease YbeY from Corynebacterium glutamicum (strain R).